Reading from the N-terminus, the 283-residue chain is Undecaprenyl-diphosphatase (283 aa).

Transmembrane regions (helical) follow at residues 47–67 (PGLS…IAYF), 94–114 (LGIA…CIKL), 127–147 (VPAI…AELL), 197–217 (AARF…LVEL), 227–247 (GGVL…WLAI), and 261–281 (IFVV…SGSA).

Belongs to the UppP family.

The protein localises to the cell inner membrane. It catalyses the reaction di-trans,octa-cis-undecaprenyl diphosphate + H2O = di-trans,octa-cis-undecaprenyl phosphate + phosphate + H(+). Functionally, catalyzes the dephosphorylation of undecaprenyl diphosphate (UPP). Confers resistance to bacitracin. This chain is Undecaprenyl-diphosphatase, found in Synechococcus sp. (strain CC9311).